A 437-amino-acid chain; its full sequence is tRNA modification GTPase MnmE (437 aa).

Residues arginine 21, glutamate 79, and arginine 119 each coordinate (6S)-5-formyl-5,6,7,8-tetrahydrofolate. A TrmE-type G domain is found at 223-364 (GFRVVLAGPP…FRSALIAHAR (142 aa)). GTP is bound by residues 233–238 (NAGKST), 252–258 (AAEPGTT), and 277–280 (DTAG). Residues serine 237 and threonine 258 each contribute to the Mg(2+) site. Lysine 437 provides a ligand contact to (6S)-5-formyl-5,6,7,8-tetrahydrofolate.

This sequence belongs to the TRAFAC class TrmE-Era-EngA-EngB-Septin-like GTPase superfamily. TrmE GTPase family. As to quaternary structure, homodimer. Heterotetramer of two MnmE and two MnmG subunits. It depends on K(+) as a cofactor.

The protein resides in the cytoplasm. Functionally, exhibits a very high intrinsic GTPase hydrolysis rate. Involved in the addition of a carboxymethylaminomethyl (cmnm) group at the wobble position (U34) of certain tRNAs, forming tRNA-cmnm(5)s(2)U34. The chain is tRNA modification GTPase MnmE from Novosphingobium aromaticivorans (strain ATCC 700278 / DSM 12444 / CCUG 56034 / CIP 105152 / NBRC 16084 / F199).